The chain runs to 359 residues: Homoserine O-acetyltransferase (359 aa).

Residues V49 to L332 enclose the AB hydrolase-1 domain. S143 functions as the Nucleophile in the catalytic mechanism. R212 contacts substrate. Catalysis depends on residues D299 and H328. D329 provides a ligand contact to substrate.

The protein belongs to the AB hydrolase superfamily. MetX family. As to quaternary structure, homodimer.

The protein resides in the cytoplasm. The enzyme catalyses L-homoserine + acetyl-CoA = O-acetyl-L-homoserine + CoA. Its pathway is amino-acid biosynthesis; L-methionine biosynthesis via de novo pathway; O-acetyl-L-homoserine from L-homoserine: step 1/1. Transfers an acetyl group from acetyl-CoA to L-homoserine, forming acetyl-L-homoserine. This is Homoserine O-acetyltransferase from Trichormus variabilis (strain ATCC 29413 / PCC 7937) (Anabaena variabilis).